Consider the following 284-residue polypeptide: uncharacterized protein (284 aa).

Positions 1–24 are cleaved as a signal peptide; sequence MLYSRESRTTVLFLALVTSLTVLC. At 25–84 the chain is on the cytoplasmic side; it reads HSVDVTTVFTTSTITEITTVTAAPQPQNKAETALNTATNIIQTMQFLFNCAPFKWKGPLK. A helical membrane pass occupies residues 85–104; the sequence is ITSCALNFIVLLLTAWGYLL. At 105–284 the chain is on the extracellular side; sequence KYLQENKLNS…SVHMYSSSLL (180 aa). An N-linked (GlcNAc...) asparagine glycan is attached at asparagine 270.

To yeast YNL019c.

Its subcellular location is the cell membrane. This is an uncharacterized protein from Saccharomyces cerevisiae (strain ATCC 204508 / S288c) (Baker's yeast).